Here is a 1176-residue protein sequence, read N- to C-terminus: Condensin complex subunit 1 (1176 aa).

2 positions are modified to phosphoserine: Ser464 and Ser475.

This sequence belongs to the CND1 (condensin subunit 1) family. Component of the condensin complex, which contains the SMC2 and SMC4 heterodimer, and three non SMC subunits that probably regulate the complex: BRN1, YCS4 and YCG1/YCS5.

It is found in the nucleus. The protein localises to the chromosome. Its function is as follows. Regulatory subunit of the condensin complex, a complex required for conversion of interphase chromatin into mitotic-like condense chromosomes. The condensin complex probably introduces positive supercoils into relaxed DNA in the presence of type I topoisomerases and converts nicked DNA into positive knotted forms in the presence of type II topoisomerases. The condensin complex probably also plays a role during interphase. This Saccharomyces cerevisiae (strain ATCC 204508 / S288c) (Baker's yeast) protein is Condensin complex subunit 1 (YCS4).